Consider the following 111-residue polypeptide: Large ribosomal subunit protein uL22 (111 aa).

This sequence belongs to the universal ribosomal protein uL22 family. Part of the 50S ribosomal subunit.

Functionally, this protein binds specifically to 23S rRNA; its binding is stimulated by other ribosomal proteins, e.g. L4, L17, and L20. It is important during the early stages of 50S assembly. It makes multiple contacts with different domains of the 23S rRNA in the assembled 50S subunit and ribosome. Its function is as follows. The globular domain of the protein is located near the polypeptide exit tunnel on the outside of the subunit, while an extended beta-hairpin is found that lines the wall of the exit tunnel in the center of the 70S ribosome. In Pelobacter propionicus (strain DSM 2379 / NBRC 103807 / OttBd1), this protein is Large ribosomal subunit protein uL22.